A 175-amino-acid polypeptide reads, in one-letter code: Anterior gradient protein 2 homolog (175 aa).

A signal peptide spans 1–20 (MEKISVSAFLLLVALSYTLA). A required to promote cell adhesion region spans residues 21–40 (RDTTVKPAAKKDTKDSRPKL). Short sequence motifs (homodimer stabilization; interchain) lie at residues 45–54 (SRGWGDQLIW) and 60–67 (EALYKSKT).

It belongs to the AGR family. In terms of assembly, monomer and homodimer. Interacts with LYPD3 and DAG1 (alphaDAG1). Interacts with MUC2; disulfide-linked.

Its subcellular location is the secreted. The protein resides in the endoplasmic reticulum. Functionally, required for MUC2 post-transcriptional synthesis and secretion. May play a role in the production of mucus by intestinal cells. Proto-oncogene that may play a role in cell migration, cell differentiation and cell growth. Promotes cell adhesion. This chain is Anterior gradient protein 2 homolog (AGR2), found in Pongo abelii (Sumatran orangutan).